A 484-amino-acid polypeptide reads, in one-letter code: tRNA-2-methylthio-N(6)-dimethylallyladenosine synthase (484 aa).

The MTTase N-terminal domain occupies 29–149; the sequence is GVFHIHTLGC…LPKLLDQNRA (121 aa). Residues C38, C78, C112, C186, C190, and C193 each coordinate [4Fe-4S] cluster. One can recognise a Radical SAM core domain in the interval 172–401; the sequence is RASRISSWVA…VALQEQITEE (230 aa). In terms of domain architecture, TRAM spans 404 to 474; sequence ATFEGRDVEV…RHNLLADPDV (71 aa).

This sequence belongs to the methylthiotransferase family. MiaB subfamily. Monomer. It depends on [4Fe-4S] cluster as a cofactor.

Its subcellular location is the cytoplasm. It catalyses the reaction N(6)-dimethylallyladenosine(37) in tRNA + (sulfur carrier)-SH + AH2 + 2 S-adenosyl-L-methionine = 2-methylsulfanyl-N(6)-dimethylallyladenosine(37) in tRNA + (sulfur carrier)-H + 5'-deoxyadenosine + L-methionine + A + S-adenosyl-L-homocysteine + 2 H(+). In terms of biological role, catalyzes the methylthiolation of N6-(dimethylallyl)adenosine (i(6)A), leading to the formation of 2-methylthio-N6-(dimethylallyl)adenosine (ms(2)i(6)A) at position 37 in tRNAs that read codons beginning with uridine. This is tRNA-2-methylthio-N(6)-dimethylallyladenosine synthase from Bifidobacterium longum subsp. infantis (strain ATCC 15697 / DSM 20088 / JCM 1222 / NCTC 11817 / S12).